Reading from the N-terminus, the 364-residue chain is Methylthioribose-1-phosphate isomerase (364 aa).

Residues 49-51 (RGA), Arg-89, and Gln-201 each bind substrate. Asp-242 functions as the Proton donor in the catalytic mechanism. Substrate is bound at residue 252-253 (NK).

It belongs to the eIF-2B alpha/beta/delta subunits family. MtnA subfamily.

It catalyses the reaction 5-(methylsulfanyl)-alpha-D-ribose 1-phosphate = 5-(methylsulfanyl)-D-ribulose 1-phosphate. The protein operates within amino-acid biosynthesis; L-methionine biosynthesis via salvage pathway; L-methionine from S-methyl-5-thio-alpha-D-ribose 1-phosphate: step 1/6. Functionally, catalyzes the interconversion of methylthioribose-1-phosphate (MTR-1-P) into methylthioribulose-1-phosphate (MTRu-1-P). The protein is Methylthioribose-1-phosphate isomerase of Leptospira interrogans serogroup Icterohaemorrhagiae serovar copenhageni (strain Fiocruz L1-130).